Reading from the N-terminus, the 157-residue chain is Heavy metal-associated isoprenylated plant protein 16 (157 aa).

Positions 2–71 constitute an HMA domain; sequence KQKILIRIAM…KVAFAELVSV (70 aa). The segment at 73–115 is disordered; that stretch reads KVEPPKDGDKKPEEEKKPEEKKPEEKKPEEKKPEPCCQPWQKP. A compositionally biased stretch (basic and acidic residues) spans 75 to 106; sequence EPPKDGDKKPEEEKKPEEKKPEEKKPEEKKPE. Cysteine methyl ester is present on C154. C154 is lipidated: S-farnesyl cysteine. Residues 155–157 constitute a propeptide, removed in mature form; the sequence is RIM.

The protein belongs to the HIPP family.

In terms of biological role, probable heavy-metal-binding protein. In Arabidopsis thaliana (Mouse-ear cress), this protein is Heavy metal-associated isoprenylated plant protein 16.